We begin with the raw amino-acid sequence, 102 residues long: MRMGSLICTCSSSSKANTNARISDSSTWYHQPGQHISIQTFRELNPAPTSSPTSTRTVILGDGEHFRSMDDQPEGVNNLQTTLTPRHLTAAVNQRLLRSLEN.

The protein belongs to the geminiviridae protein AC4/C4 family.

Pathogenicity determinant. May act as a suppressor of RNA-mediated gene silencing, also known as post-transcriptional gene silencing (PTGS), a mechanism of plant viral defense that limits the accumulation of viral RNAs. In Indian cassava mosaic virus (ICMV), this protein is Protein AC4.